Reading from the N-terminus, the 280-residue chain is Energy-coupling factor transporter ATP-binding protein EcfA1 (280 aa).

The ABC transporter domain maps to Ile-7–Asp-241. Residue Gly-41–Ser-48 coordinates ATP.

Belongs to the ABC transporter superfamily. Energy-coupling factor EcfA family. In terms of assembly, forms a stable energy-coupling factor (ECF) transporter complex composed of 2 membrane-embedded substrate-binding proteins (S component), 2 ATP-binding proteins (A component) and 2 transmembrane proteins (T component).

The protein localises to the cell membrane. Functionally, ATP-binding (A) component of a common energy-coupling factor (ECF) ABC-transporter complex. Unlike classic ABC transporters this ECF transporter provides the energy necessary to transport a number of different substrates. In Latilactobacillus sakei subsp. sakei (strain 23K) (Lactobacillus sakei subsp. sakei), this protein is Energy-coupling factor transporter ATP-binding protein EcfA1.